The chain runs to 699 residues: Auxin response factor 10 (699 aa).

3 disordered regions span residues 108–136 (AAEA…DANN), 505–533 (TDLT…DDTK), and 551–595 (KNGN…SWSL). Residues 110-119 (EARREEENSR) are compositionally biased toward basic and acidic residues. A compositionally biased stretch (polar residues) spans 125 to 135 (FAKTLTQSDAN). The segment at residues 125–227 (FAKTLTQSDA…NIHVGLRRAK (103 aa)) is a DNA-binding region (TF-B3). The span at 570 to 593 (PNTSEGSDSGVTQGSPTKNTTPSW) shows a compositional bias: polar residues. The PB1 domain maps to 613-693 (PGQCKVFVES…RKLRILTDAG (81 aa)).

Belongs to the ARF family. As to quaternary structure, homodimers and heterodimers.

The protein localises to the nucleus. Auxin response factors (ARFs) are transcriptional factors that bind specifically to the DNA sequence 5'-TGTCTC-3' found in the auxin-responsive promoter elements (AuxREs). The polypeptide is Auxin response factor 10 (ARF10) (Oryza sativa subsp. indica (Rice)).